Consider the following 341-residue polypeptide: Farnesyl pyrophosphate synthase 2 (341 aa).

Positions 46, 49, and 85 each coordinate isopentenyl diphosphate. 2 residues coordinate Mg(2+): aspartate 92 and aspartate 96. Arginine 101 is a dimethylallyl diphosphate binding site. Arginine 102 contributes to the isopentenyl diphosphate binding site. Residues lysine 189, threonine 190, glutamine 228, lysine 245, and lysine 254 each coordinate dimethylallyl diphosphate.

Belongs to the FPP/GGPP synthase family. It depends on Mg(2+) as a cofactor. Mainly expressed in trichomes, roots and flowers, and, to a lower extent, in leaves and stems.

Its subcellular location is the cytoplasm. The protein localises to the nucleus. The enzyme catalyses isopentenyl diphosphate + dimethylallyl diphosphate = (2E)-geranyl diphosphate + diphosphate. The catalysed reaction is isopentenyl diphosphate + (2E)-geranyl diphosphate = (2E,6E)-farnesyl diphosphate + diphosphate. It functions in the pathway isoprenoid biosynthesis; farnesyl diphosphate biosynthesis; farnesyl diphosphate from geranyl diphosphate and isopentenyl diphosphate: step 1/1. It participates in sesquiterpene biosynthesis. Its pathway is isoprenoid biosynthesis; geranyl diphosphate biosynthesis; geranyl diphosphate from dimethylallyl diphosphate and isopentenyl diphosphate: step 1/1. Its function is as follows. Catalyzes the sequential condensation of isopentenyl pyrophosphate with the allylic pyrophosphates, dimethylallyl pyrophosphate, and then with the resultant geranylpyrophosphate to the ultimate product farnesyl pyrophosphate. This Cannabis sativa (Hemp) protein is Farnesyl pyrophosphate synthase 2.